Consider the following 781-residue polypeptide: Catenin beta-1 (781 aa).

An N-acetylalanine modification is found at Ala2. Residues 2-23 (ATQADLMELDMAMEPDRKAAVS) are interaction with VCL. The residue at position 23 (Ser23) is a Phosphoserine; by GSK3-beta; alternate. The O-linked (GlcNAc) serine; alternate glycan is linked to Ser23. Ser29 carries the phosphoserine; by GSK3-beta modification. A phosphoserine; by GSK3-beta and HIPK2 mark is found at Ser33 and Ser37. The interval 34-57 (GIHSGATTTAPSLSGKGNPEEEDV) is disordered. Thr41 carries the post-translational modification Phosphothreonine; by GSK3-beta. A Phosphoserine modification is found at Ser45. N6-acetyllysine is present on Lys49. Residue Tyr64 is modified to Phosphotyrosine; by PTK6. Tyr142 bears the Phosphotyrosine; by FYN and PTK6 mark. 12 ARM repeats span residues 151-191 (RAIP…IMRS), 193-234 (QMVS…IFKS), 235-276 (GGIP…VRLA), 277-318 (GGLQ…ILAS), 319-360 (GGPQ…IVEA), 361-389 (GGMQ…RNLS), 400-441 (GLLG…VCQV), 442-484 (GGIE…AQNA), 489-530 (YGLP…LREQ), 531-571 (GAIP…EIVE), 594-636 (NTIP…AEGA), and 637-666 (TAPL…SEDK). Residues 156–178 (LTKLLNDEDQVVVNKAAVMVHQL) form an interaction with BCL9 region. Ser191 bears the Phosphoserine mark. Position 246 is a phosphoserine; by CDK5 (Ser246). 2 positions are modified to phosphotyrosine: Tyr331 and Tyr333. Position 552 is a phosphoserine (Ser552). At Thr556 the chain carries Phosphothreonine. Position 619 is an S-nitrosocysteine (Cys619). Ser675 bears the Phosphoserine mark. Positions 720–781 (HSGGYGQDAL…NQLAWFDTDL (62 aa)) are disordered. Residues 734–745 (MMEHEMGGHHPG) show a composition bias toward basic and acidic residues. The interaction with SCRIB stretch occupies residues 772-781 (NQLAWFDTDL).

Belongs to the beta-catenin family. As to quaternary structure, two separate complex-associated pools are found in the cytoplasm. The majority is present as component of an E-cadherin/ catenin adhesion complex composed of at least E-cadherin/CDH1 and beta-catenin/CTNNB1, and possibly alpha-catenin/CTNNA1; the complex is located to adherens junctions. The stable association of CTNNA1 is controversial as CTNNA1 was shown not to bind to F-actin when assembled in the complex. Alternatively, the CTNNA1-containing complex may be linked to F-actin by other proteins such as LIMA1. Another cytoplasmic pool is part of a large complex containing AXIN1, AXIN2, APC, CSNK1A1 and GSK3B that promotes phosphorylation on N-terminal Ser and Thr residues and ubiquitination of CTNNB1. Interacts directly with AXIN1; the interaction is regulated by CK2 via BTRC and its subsequent degradation by the proteasome. Interacts directly with AXIN1; the interaction is regulated by CDK2 phosphorylation. Wnt-dependent activation of DVL antagonizes the action of GSK3B. When GSK3B activity is inhibited the complex dissociates, CTNNB1 is dephosphorylated and is no longer targeted for destruction. The stabilized protein translocates to the nucleus, where it binds TCF/LEF-1 family members, BCL9, BCL9L and possibly also RUVBL1 and CHD8. Binds CTNNBIP and EP300. CTNNB1 forms a ternary complex with LEF1 and EP300 that is disrupted by CTNNBIP1 binding. Interacts with TAX1BP3 (via the PDZ domain); this interaction inhibits the transcriptional activity of CTNNB1. Interacts with AJAP1, BAIAP1, CARM1, CTNNA3, CXADR and PCDH11Y. Binds NHERF1. Interacts with GLIS2. Interacts with XIRP1. Interacts with PTPRU (via the cytoplasmic juxtamembrane domain) and with SLC30A9. Interacts with EMD. Interacts with SCRIB. Interacts with TNIK and TCF7L2. Interacts with SESTD1 and TRPC4. Interacts directly with AXIN1; the interaction is regulated by CDK2 phosphorylation of AXIN1. Interacts with CAV1. Interacts with TRPV4. The TRPV4 and CTNNB1 complex can interact with CDH1. Interacts with VCL. Interacts with PTPRJ. Interacts with PKT7. Interacts with NANOS1. Interacts with CDK2, NDRG2, NEK2 and CDK5. Found in a complex composed of MACF1, APC, AXIN1, CTNNB1 and GSK3B. Interacts with PTK6. Interacts with SOX7; this interaction may lead to proteasomal degradation of active CTNNB1 and thus inhibition of Wnt/beta-catenin-stimulated transcription. Identified in a complex with HINT1 and MITF. Interacts with FHIT. The CTNNB1 and TCF4 complex interacts with PML. Interacts with FERMT2. Identified in a complex with TCF4 and FERMT2. Interacts with RAPGEF2. Interacts with FAT1 (via the cytoplasmic domain). Interacts with RORA. May interact with P-cadherin/CDH3. Interacts with RNF220. Interacts with CTNND2. Interacts (via the C-terminal region) with CBY1. The complex composed, at least, of APC, CTNNB1 and GSK3B interacts with JPT1; the interaction requires the inactive form of GSK3B (phosphorylated at 'Ser-9'). Interacts with DLG5. Interacts with FAM53B; promoting translocation to the nucleus. Interacts with TMEM170B. Interacts with AHI1. Interacts with GID8. Component of an cadherin:catenin adhesion complex composed of at least of CDH26, beta-catenin/CTNNB1, alpha-catenin/CTNNA1 and p120 catenin/CTNND1. Forms a complex comprising APPL1, RUVBL2, APPL2, HDAC1 and HDAC2. Interacts with IRF2BPL; mediates the ubiquitination and degradation of CTNNB1. Interacts with AMFR. Interacts with LMBR1L. Interacts with SOX30; prevents interaction of CTNNB1 with TCF7L2/TCF4 and leads to inhibition of Wnt signaling. Interacts with SOX9; inhibiting CTNNB1 activity by competing with the binding sites of TCF/LEF within CTNNB1, thereby inhibiting the Wnt signaling. Interacts with SPN/CD43 cytoplasmic tail. Interacts (when phosphorylated at Tyr-333) with isoform M2 of PKM (PKM2); promoting transcription activation. Interacts with PKP2 (via HEAD domain). Interacts with CDH1. Interacts (when unphosphorylated) with FLYWCH1, perhaps preventing interaction of CTNNB1 with TCF4, and thereby regulating transcription activation; phosphorylation of CTNNB1 may inhibit the interaction. Interacts (via the central armadillo domains) with probable transcriptional regulator ADNP (via N-terminal region); interaction is direct and stabilizes CTNNB1 by modulating its phosphorylation by glycogen synthase kinase-3 beta GSK3B. Interacts with NR5A2. Interacts with DSG2; the interaction promotes localization of CTNNB1 at cell junctions thus reducing its nuclear localization and subsequent transcription of CTNNB1/TCF-target genes. In terms of processing, phosphorylation by GSK3B requires prior phosphorylation of Ser-45 by another kinase. Phosphorylation proceeds then from Thr-41 to Ser-33. Phosphorylated by NEK2. EGF stimulates tyrosine phosphorylation. Phosphorylated on Ser-33 and Ser-37 by HIPK2. This phosphorylation triggers proteasomal degradation. Phosphorylation at Ser-552 by AMPK promotes stabilization of the protein, enhancing TCF/LEF-mediated transcription. Phosphorylation on Ser-191 and Ser-246 by CDK5. Phosphorylation by CDK2 regulates insulin internalization. Phosphorylation by PTK6 at Tyr-64, Tyr-142, Tyr-331 and/or Tyr-333 with the predominant site at Tyr-64 is not essential for inhibition of transcriptional activity. Phosphorylation by SRC at Tyr-333 promotes interaction with isoform M2 of PKM (PKM2); promoting transcription activation. Post-translationally, ubiquitinated by the SCF(BTRC) E3 ligase complex when phosphorylated by GSK3B, leading to its degradation. Ubiquitinated by a E3 ubiquitin ligase complex containing UBE2D1, SIAH1, CACYBP/SIP, SKP1, APC and TBL1X, leading to its subsequent proteasomal degradation. Ubiquitinated and degraded following interaction with SOX9. Ubiquitinated via 'Lys-11'- and 'Lys-29'-linked ubiquitin chains by UBR5, leading to its stabilization. S-nitrosylation at Cys-619 within adherens junctions promotes VEGF-induced, NO-dependent endothelial cell permeability by disrupting interaction with E-cadherin, thus mediating disassembly adherens junctions. In terms of processing, O-glycosylation at Ser-23 decreases nuclear localization and transcriptional activity, and increases localization to the plasma membrane and interaction with E-cadherin CDH1. Post-translationally, deacetylated at Lys-49 by SIRT1. Expressed in the testis.

The protein localises to the cytoplasm. The protein resides in the nucleus. It localises to the cytoskeleton. It is found in the cell junction. Its subcellular location is the adherens junction. The protein localises to the cell membrane. The protein resides in the microtubule organizing center. It localises to the centrosome. It is found in the spindle pole. Its subcellular location is the synapse. The protein localises to the cilium basal body. Its function is as follows. Key downstream component of the canonical Wnt signaling pathway. In the absence of Wnt, forms a complex with AXIN1, AXIN2, APC, CSNK1A1 and GSK3B that promotes phosphorylation on N-terminal Ser and Thr residues and ubiquitination of CTNNB1 via BTRC and its subsequent degradation by the proteasome. In the presence of Wnt ligand, CTNNB1 is not ubiquitinated and accumulates in the nucleus, where it acts as a coactivator for transcription factors of the TCF/LEF family, leading to activate Wnt responsive genes. Also acts as a coactivator for other transcription factors, such as NR5A2. Promotes epithelial to mesenchymal transition/mesenchymal to epithelial transition (EMT/MET) via driving transcription of CTNNB1/TCF-target genes. Involved in the regulation of cell adhesion, as component of an E-cadherin:catenin adhesion complex. Acts as a negative regulator of centrosome cohesion. Involved in the CDK2/PTPN6/CTNNB1/CEACAM1 pathway of insulin internalization. Blocks anoikis of malignant kidney and intestinal epithelial cells and promotes their anchorage-independent growth by down-regulating DAPK2. Disrupts PML function and PML-NB formation by inhibiting RANBP2-mediated sumoylation of PML. Promotes neurogenesis by maintaining sympathetic neuroblasts within the cell cycle. Involved in chondrocyte differentiation via interaction with SOX9: SOX9-binding competes with the binding sites of TCF/LEF within CTNNB1, thereby inhibiting the Wnt signaling. Acts as a positive regulator of odontoblast differentiation during mesenchymal tooth germ formation, via promoting the transcription of differentiation factors such as LEF1, BMP2 and BMP4. Activity is repressed in a MSX1-mediated manner at the bell stage of mesenchymal tooth germ formation which prevents premature differentiation of odontoblasts. The protein is Catenin beta-1 of Rattus norvegicus (Rat).